The sequence spans 434 residues: Beta-enolase (434 aa).

Serine 2 is modified (N-acetylserine). Positions 158 and 167 each coordinate substrate. Glutamate 210 functions as the Proton donor in the catalytic mechanism. Mg(2+) is bound by residues aspartate 245, glutamate 293, and aspartate 318. Positions 293 and 318 each coordinate substrate. Lysine 343 acts as the Proton acceptor in catalysis. Residues 370 to 373 and lysine 394 each bind substrate; that span reads SHRS.

It belongs to the enolase family. Homodimer. Interacts with PNKD. Mg(2+) is required as a cofactor.

It localises to the cytoplasm. The catalysed reaction is (2R)-2-phosphoglycerate = phosphoenolpyruvate + H2O. It participates in carbohydrate degradation; glycolysis; pyruvate from D-glyceraldehyde 3-phosphate: step 4/5. Its function is as follows. Glycolytic enzyme that catalyzes the conversion of 2-phosphoglycerate to phosphoenolpyruvate. The protein is Beta-enolase (ENO3) of Gallus gallus (Chicken).